A 111-amino-acid chain; its full sequence is Universal stress protein B (111 aa).

The next 2 helical transmembrane spans lie at 1–21 (MISTVALFWALCVVCVINMAR) and 90–110 (FILTSALCGLVMVSLVGLILW).

It belongs to the universal stress protein B family.

It localises to the cell inner membrane. The chain is Universal stress protein B from Yersinia enterocolitica serotype O:8 / biotype 1B (strain NCTC 13174 / 8081).